The chain runs to 355 residues: UDP-N-acetylglucosamine--N-acetylmuramyl-(pentapeptide) pyrophosphoryl-undecaprenol N-acetylglucosamine transferase (355 aa).

UDP-N-acetyl-alpha-D-glucosamine-binding positions include 15-17 (TGG), N127, R163, S191, I244, 263-268 (ALTVSE), and Q288.

This sequence belongs to the glycosyltransferase 28 family. MurG subfamily.

It localises to the cell inner membrane. The catalysed reaction is di-trans,octa-cis-undecaprenyl diphospho-N-acetyl-alpha-D-muramoyl-L-alanyl-D-glutamyl-meso-2,6-diaminopimeloyl-D-alanyl-D-alanine + UDP-N-acetyl-alpha-D-glucosamine = di-trans,octa-cis-undecaprenyl diphospho-[N-acetyl-alpha-D-glucosaminyl-(1-&gt;4)]-N-acetyl-alpha-D-muramoyl-L-alanyl-D-glutamyl-meso-2,6-diaminopimeloyl-D-alanyl-D-alanine + UDP + H(+). Its pathway is cell wall biogenesis; peptidoglycan biosynthesis. In terms of biological role, cell wall formation. Catalyzes the transfer of a GlcNAc subunit on undecaprenyl-pyrophosphoryl-MurNAc-pentapeptide (lipid intermediate I) to form undecaprenyl-pyrophosphoryl-MurNAc-(pentapeptide)GlcNAc (lipid intermediate II). The polypeptide is UDP-N-acetylglucosamine--N-acetylmuramyl-(pentapeptide) pyrophosphoryl-undecaprenol N-acetylglucosamine transferase (Shigella flexneri serotype 5b (strain 8401)).